A 486-amino-acid chain; its full sequence is Nucleolar GTP-binding protein 2 (486 aa).

The interval 1–20 (MGTGKKEKSRRIREGDTKDG) is disordered. 3 positions are modified to phosphoserine: S60, S85, and S155. One can recognise a CP-type G domain in the interval 212–373 (WNELYKVIDS…LIDCPGIVPP (162 aa)). Residues 322–329 (GYPNTGKS) and 366–370 (DCPGI) contribute to the GTP site.

This sequence belongs to the TRAFAC class YlqF/YawG GTPase family. NOG2 subfamily.

The protein localises to the nucleus. The protein resides in the nucleolus. GTPase that associates with pre-60S ribosomal subunits in the nucleolus and is required for their nuclear export and maturation. This is Nucleolar GTP-binding protein 2 (NOG2) from Saccharomyces cerevisiae (strain ATCC 204508 / S288c) (Baker's yeast).